A 241-amino-acid chain; its full sequence is MRTLFIGDLHLSADRLDITQAFTHFLDTELDDADALYILGDLFEVWVGDDIAAPFALELANKLKQVSLKLPVYFIHGNRDFMLGKQFARAAGMQILPEVTCLNLYGVKTVILHGDSLCTLDKAYQRFRKLRSLALARWLYGCLSKKTRQGIADNIRSKSKSSNKHKSYTIMDVEPNAVNALLARTHAQYMIHGHTHRPAIHQLDNGCKRIVVGDWYQQGSVLSVSPQGIDLQSLPFSPQQD.

5 residues coordinate Mn(2+): D8, H10, D41, N78, and H113. 78–79 contacts substrate; the sequence is NR. Residues D121, S159, N163, K166, and H194 each contribute to the substrate site. Mn(2+)-binding residues include H194 and H196.

The protein belongs to the LpxH family. Requires Mn(2+) as cofactor.

The protein localises to the cell inner membrane. The enzyme catalyses UDP-2-N,3-O-bis[(3R)-3-hydroxytetradecanoyl]-alpha-D-glucosamine + H2O = 2-N,3-O-bis[(3R)-3-hydroxytetradecanoyl]-alpha-D-glucosaminyl 1-phosphate + UMP + 2 H(+). It functions in the pathway glycolipid biosynthesis; lipid IV(A) biosynthesis; lipid IV(A) from (3R)-3-hydroxytetradecanoyl-[acyl-carrier-protein] and UDP-N-acetyl-alpha-D-glucosamine: step 4/6. Hydrolyzes the pyrophosphate bond of UDP-2,3-diacylglucosamine to yield 2,3-diacylglucosamine 1-phosphate (lipid X) and UMP by catalyzing the attack of water at the alpha-P atom. Involved in the biosynthesis of lipid A, a phosphorylated glycolipid that anchors the lipopolysaccharide to the outer membrane of the cell. The polypeptide is UDP-2,3-diacylglucosamine hydrolase (Shewanella putrefaciens (strain CN-32 / ATCC BAA-453)).